The chain runs to 352 residues: Anthranilate phosphoribosyltransferase (352 aa).

Residues G94, 97–98 (GS), S102, 104–107 (NIST), 122–130 (KHGNRAVSS), and S134 contribute to the 5-phospho-alpha-D-ribose 1-diphosphate site. G94 is an anthranilate binding site. Residue S106 participates in Mg(2+) binding. N125 contributes to the anthranilate binding site. R180 contributes to the anthranilate binding site. Mg(2+)-binding residues include D239 and E240.

This sequence belongs to the anthranilate phosphoribosyltransferase family. In terms of assembly, homodimer. The cofactor is Mg(2+).

The enzyme catalyses N-(5-phospho-beta-D-ribosyl)anthranilate + diphosphate = 5-phospho-alpha-D-ribose 1-diphosphate + anthranilate. Its pathway is amino-acid biosynthesis; L-tryptophan biosynthesis; L-tryptophan from chorismate: step 2/5. In terms of biological role, catalyzes the transfer of the phosphoribosyl group of 5-phosphorylribose-1-pyrophosphate (PRPP) to anthranilate to yield N-(5'-phosphoribosyl)-anthranilate (PRA). The polypeptide is Anthranilate phosphoribosyltransferase (Geobacter sp. (strain M21)).